The following is a 479-amino-acid chain: ATP synthase subunit beta (479 aa).

153–160 (GGAGVGKT) lines the ATP pocket.

The protein belongs to the ATPase alpha/beta chains family. F-type ATPases have 2 components, CF(1) - the catalytic core - and CF(0) - the membrane proton channel. CF(1) has five subunits: alpha(3), beta(3), gamma(1), delta(1), epsilon(1). CF(0) has three main subunits: a(1), b(2) and c(9-12). The alpha and beta chains form an alternating ring which encloses part of the gamma chain. CF(1) is attached to CF(0) by a central stalk formed by the gamma and epsilon chains, while a peripheral stalk is formed by the delta and b chains.

The protein localises to the cell membrane. The enzyme catalyses ATP + H2O + 4 H(+)(in) = ADP + phosphate + 5 H(+)(out). Functionally, produces ATP from ADP in the presence of a proton gradient across the membrane. The catalytic sites are hosted primarily by the beta subunits. The chain is ATP synthase subunit beta from Lactobacillus delbrueckii subsp. bulgaricus (strain ATCC 11842 / DSM 20081 / BCRC 10696 / JCM 1002 / NBRC 13953 / NCIMB 11778 / NCTC 12712 / WDCM 00102 / Lb 14).